Reading from the N-terminus, the 650-residue chain is Chaperone protein DnaK (650 aa).

Thr-200 carries the post-translational modification Phosphothreonine; by autocatalysis.

It belongs to the heat shock protein 70 family.

Functionally, acts as a chaperone. This Burkholderia orbicola (strain MC0-3) protein is Chaperone protein DnaK.